Consider the following 1004-residue polypeptide: Liprin-beta homolog (1004 aa).

Low complexity-rich tracts occupy residues 50 to 63 (NGNS…TIGS) and 149 to 161 (SPPS…SSSL). Disordered regions lie at residues 50–122 (NGNS…RSSR) and 135–161 (HRTD…SSSL). Coiled coils occupy residues 280–328 (CQEL…VNQS) and 364–396 (DEMS…ALDE). Disordered stretches follow at residues 341–366 (HTNG…DDEM), 432–497 (PSDS…GGNQ), 528–550 (NGNE…GKAS), and 648–686 (FSKL…LGTV). Residues 434–453 (DSMSHSTSFPVSLSSTTSNG) show a composition bias toward polar residues. Over residues 458 to 474 (STVQSSSSYNSSLSAVS) the composition is skewed to low complexity. Polar residues-rich tracts occupy residues 531–541 (EGANHNYSSAS) and 648–684 (FSKL…NHLG). 3 SAM domains span residues 698 to 762 (WRSE…IEED), 770 to 833 (WDVH…LKKA), and 858 to 930 (VVRW…LLGP).

It belongs to the liprin family. Liprin-beta subfamily. As to expression, expressed in pharyngeal muscle, particularly posterior bulb, adjacent to the dorsal and ventral cord (but not in ventral cord neurons), and in body wall muscles.

Functionally, involved in the regulation of synaptic function at neuromuscular junctions. Together with the liprin-alpha protein syd-2, may play a role in regulating the structure of the neuronal region, called the active zone, from which synaptic vesicles send neurotransmitter signals across the synapse. Does not seem to be required for neuronal development. May regulate the disassembly of focal adhesions. Does not bind receptor-like tyrosine phosphatases type 2A. The polypeptide is Liprin-beta homolog (Caenorhabditis elegans).